We begin with the raw amino-acid sequence, 110 residues long: uncharacterized protein (110 aa).

Residues 16–46 (ELDKLRECEERLSVIEKQKQSSKQESEETYI) are a coiled coil. Residues 85-96 (EEKDKKCQRKPE) show a composition bias toward basic and acidic residues. Residues 85 to 110 (EEKDKKCQRKPEAPSTPAVTIRSKRQ) are disordered.

This is an uncharacterized protein from Bacillus subtilis (strain 168).